The sequence spans 686 residues: CAI-1 autoinducer sensor kinase/phosphatase CqsS (686 aa).

A run of 6 helical transmembrane segments spans residues 21 to 41 (LVGW…EYWF), 47 to 64 (NLGL…LVFR), 77 to 97 (GYFL…MMLM), 100 to 120 (WSTI…LLVH), 124 to 144 (VMAL…YGLT), and 152 to 172 (IEWQ…LCFF). A Histidine kinase domain is found at 191–416 (GIAHEMRNPL…EFVLSFPRYD (226 aa)). A Phosphohistidine; by autocatalysis modification is found at histidine 194. Residues 569–686 (RILVVDDNQS…VLLNKVAAWV (118 aa)) form the Response regulatory domain. Residue aspartate 618 is modified to 4-aspartylphosphate.

The protein localises to the cell membrane. The enzyme catalyses ATP + protein L-histidine = ADP + protein N-phospho-L-histidine.. Functionally, senses the quorum-sensing autoinducer CAI-1 ((S)-3-hydroxytridecan-4-one) which probably functions as an intragenus signal. The sensory signal is then relayed to LuxU and LuxO. This chain is CAI-1 autoinducer sensor kinase/phosphatase CqsS (cqsS), found in Vibrio cholerae serotype O1 (strain ATCC 39315 / El Tor Inaba N16961).